The chain runs to 164 residues: Large ribosomal subunit protein eL24 (164 aa).

2 disordered regions span residues 63 to 82 and 117 to 164; these read KDAAQEAVKKRRRATKKPYS and ERIK…GGKA. Residues 71–81 show a composition bias toward basic residues; it reads KKRRRATKKPY. Over residues 117 to 133 the composition is skewed to basic and acidic residues; the sequence is ERIKKTKDEKKAKKAEV.

This sequence belongs to the eukaryotic ribosomal protein eL24 family.

The protein resides in the cytoplasm. This chain is Large ribosomal subunit protein eL24 (RPL24), found in Cicer arietinum (Chickpea).